The primary structure comprises 209 residues: Large ribosomal subunit protein uL3 (209 aa).

The interval 128–156 is disordered; it reads FAGGSRTHGQSDRLRAPGSVGGSSDPSRT.

It belongs to the universal ribosomal protein uL3 family. In terms of assembly, part of the 50S ribosomal subunit. Forms a cluster with proteins L14 and L19.

One of the primary rRNA binding proteins, it binds directly near the 3'-end of the 23S rRNA, where it nucleates assembly of the 50S subunit. This is Large ribosomal subunit protein uL3 from Prosthecochloris aestuarii (strain DSM 271 / SK 413).